The following is a 252-amino-acid chain: Imidazole glycerol phosphate synthase subunit HisF (252 aa).

Catalysis depends on residues aspartate 11 and aspartate 130.

The protein belongs to the HisA/HisF family. As to quaternary structure, heterodimer of HisH and HisF.

It is found in the cytoplasm. It catalyses the reaction 5-[(5-phospho-1-deoxy-D-ribulos-1-ylimino)methylamino]-1-(5-phospho-beta-D-ribosyl)imidazole-4-carboxamide + L-glutamine = D-erythro-1-(imidazol-4-yl)glycerol 3-phosphate + 5-amino-1-(5-phospho-beta-D-ribosyl)imidazole-4-carboxamide + L-glutamate + H(+). It functions in the pathway amino-acid biosynthesis; L-histidine biosynthesis; L-histidine from 5-phospho-alpha-D-ribose 1-diphosphate: step 5/9. Functionally, IGPS catalyzes the conversion of PRFAR and glutamine to IGP, AICAR and glutamate. The HisF subunit catalyzes the cyclization activity that produces IGP and AICAR from PRFAR using the ammonia provided by the HisH subunit. This Pelotomaculum thermopropionicum (strain DSM 13744 / JCM 10971 / SI) protein is Imidazole glycerol phosphate synthase subunit HisF.